Reading from the N-terminus, the 500-residue chain is Cryptochrome DASH (500 aa).

Residues 4 to 138 (KTVLVWYRND…PVRSFWGTTL (135 aa)) form the Photolyase/cryptochrome alpha/beta domain.

The protein belongs to the DNA photolyase class-1 family. The cofactor is FAD. (6R)-5,10-methylene-5,6,7,8-tetrahydrofolate serves as cofactor.

Its function is as follows. May have a photoreceptor function. Binds DNA; probably functions as a transcriptional repressor. This Gloeobacter violaceus (strain ATCC 29082 / PCC 7421) protein is Cryptochrome DASH (cry).